The following is a 179-amino-acid chain: MQKLKSIYITKVCPILVNEFLYTNFFEIPKINKVVISRGFGESCNSSKILESLLVELKNISGQKPILCKSKNSISNFKVKKGMPIGMFVTLHGDKMYSFLDRLINLSFPRMRDFNGLNIKGFDGFGNYNVGLSEQSIFPEIEYSSILKNKGMNITIVTTAKTDLESFSLLKGLGFPFCV.

Belongs to the universal ribosomal protein uL5 family. Part of the 50S ribosomal subunit; contacts the 5S rRNA.

Its subcellular location is the plastid. Functionally, binds 5S rRNA, forms part of the central protuberance of the 50S subunit. This chain is Large ribosomal subunit protein uL5c (rpl5), found in Euglena longa (Euglenophycean alga).